The chain runs to 541 residues: MAGSSSVQPQFIASTGNRSFSNAPLIENSDPEQIIVPDRKSWKNLFAYMGPGFLVSIAYIDPGNFETDLQSGAQYKYELLWIILVASCAALIIQSLAANLGVVTGKHLAEHCRNEYPRIPNFILWVLAEIAIVACDIPEVIGTAFALNMLFKIPVWIGVLLTGLSTLVLLALQQYGVRKLELFIAFLVCTIAGCFFAELGYAKPDAKEVLKGLFVPQLKGNGAAGLAISLLGAMVMPHNLFLHSALVLSRKIPRSMHGIKDACRFYMIESGFALVLAFLINVSIISVSGAVCNSPNINAQDQENCKDLDLNKASFLLENVLGSWSSKLFAIALLASGQSSTITGTYAGQYVMQGFLDLRLTPWLRNFLTRSLAIVPSLIVAIIGGSSGAGKLIIIASMILSFELPFALVPLLKFTSSKTKMGIYANSTTISSITWVIGFLIMAINIYYLASSFIKILLHGHLKLVAAIFLGIFGFLGMAVYLAGVAYLVLRRNKEATHLVALTSENPQIANESGNEGVYSLPREDIACMQLPQRRSNANDL.

A glycan (N-linked (GlcNAc...) asparagine) is linked at asparagine 17. 10 helical membrane passes run 45 to 65 (LFAY…PGNF), 78 to 98 (ELLW…SLAA), 122 to 142 (FILW…EVIG), 153 to 173 (IPVW…LALQ), 182 to 202 (LFIA…LGYA), 222 to 242 (GAAG…NLFL), 271 to 291 (GFAL…SGAV), 315 to 335 (FLLE…ALLA), 371 to 391 (SLAI…GAGK), and 392 to 412 (LIII…VPLL). Asparagine 426 is a glycosylation site (N-linked (GlcNAc...) asparagine). 2 consecutive transmembrane segments (helical) span residues 430–450 (ISSI…YYLA) and 465–485 (VAAI…LAGV). Asparagine 511 is a glycosylation site (N-linked (GlcNAc...) asparagine).

This sequence belongs to the NRAMP (TC 2.A.55) family.

The protein resides in the membrane. Functionally, probable divalent metal transporter. This is Metal transporter Nramp1 from Populus trichocarpa (Western balsam poplar).